The sequence spans 404 residues: MSKHPANSSATDPVDNLQTLIRCPSVTPAEGGALSALAAMLEPLGFTVERMVAREEGTPDVENLYARLGTEGPHLMFAGHTDVVPVGNEADWTYPPFSAEIAGGELYGRGAVDMKGGIACFVAAIARHIESQGAPKGSISFLITGDEEGPSINGTTKLLEWAAAKGERWDACLVGEPTNPDQLGDMIKIGRRGSLSGEIIVKGVQGHAAYPHLADNPVRGMIKLAEALMHPAFDAGTENFQPSNLEVTTIDVGNAATNVIPARASAKFNIRFNDTWTAETLRTEIIARLDTASADPLLRPGRPPIAYELVWADRPSQVFLTRNNALISSLSAAIEKMTGKTPALSTTGGTSDARFIKDYCPVVEFGLVGQTMHMVDERVAVSDLEALTGIYGAFISSWFTHAGA.

Histidine 80 is a Zn(2+) binding site. The active site involves aspartate 82. A Zn(2+)-binding site is contributed by aspartate 113. Residue glutamate 147 is the Proton acceptor of the active site. Residues glutamate 148, glutamate 176, and histidine 373 each coordinate Zn(2+).

This sequence belongs to the peptidase M20A family. DapE subfamily. As to quaternary structure, homodimer. The cofactor is Zn(2+). It depends on Co(2+) as a cofactor.

It carries out the reaction N-succinyl-(2S,6S)-2,6-diaminopimelate + H2O = (2S,6S)-2,6-diaminopimelate + succinate. The protein operates within amino-acid biosynthesis; L-lysine biosynthesis via DAP pathway; LL-2,6-diaminopimelate from (S)-tetrahydrodipicolinate (succinylase route): step 3/3. Catalyzes the hydrolysis of N-succinyl-L,L-diaminopimelic acid (SDAP), forming succinate and LL-2,6-diaminopimelate (DAP), an intermediate involved in the bacterial biosynthesis of lysine and meso-diaminopimelic acid, an essential component of bacterial cell walls. The sequence is that of Succinyl-diaminopimelate desuccinylase from Allorhizobium ampelinum (strain ATCC BAA-846 / DSM 112012 / S4) (Agrobacterium vitis (strain S4)).